A 407-amino-acid polypeptide reads, in one-letter code: Gonadotropin-releasing hormone receptor (407 aa).

The Extracellular portion of the chain corresponds to 1-36 (MDYLNDSMFNNMTYNITSTPLPDAPRFDNVYVSKLC). Residues Asn-5, Asn-11, and Asn-15 are each glycosylated (N-linked (GlcNAc...) asparagine). A helical transmembrane segment spans residues 37–57 (VLGTVFVISFFGNTLVIIQIF). Over 58 to 69 (RIRGSRSTIQSL) the chain is Cytoplasmic. A helical membrane pass occupies residues 70 to 90 (ILNLAIADLMVSFFNILMDII). The Extracellular segment spans residues 91–105 (WSATVEWLAGNTMCK). Cys-104 and Cys-183 are joined by a disulfide. A helical membrane pass occupies residues 106–126 (IMKYLTVFGLHLSTYITVSIA). Topologically, residues 127–147 (LDRCFAILSPMSRSKAPLRVR) are cytoplasmic. A helical transmembrane segment spans residues 148–168 (IMITMAWVLSAIFSIPQAVIF). Residues 169-199 (QEQRKMFRQGMFHQCRDSYNALWQKQLYSAS) lie on the Extracellular side of the membrane. A helical transmembrane segment spans residues 200 to 220 (SLILLFVIPLIIMVTSYLLIL). The Cytoplasmic segment spans residues 221-268 (KTIVKTSRQFHDTPISPTSMSCYSVNHGQIRTHLFERARKRSSRMSAV). The helical transmembrane segment at 269-289 (IVAAFILCWTPYYIIFLGFAF) threads the bilayer. Residues 290–298 (FQWDNSRTV) are Extracellular-facing. A helical transmembrane segment spans residues 299 to 319 (IYFFTLGTSNCMLNPLIYGAF). At 320–407 (TIYKVHRGRS…NGKMPTKPPG (88 aa)) the chain is on the cytoplasmic side. The segment at 377-407 (SLTNPHQPVRPSPGINSTTSPNGKMPTKPPG) is disordered.

It belongs to the G-protein coupled receptor 1 family. In terms of tissue distribution, widely expressed in peripheral nervous tissue, gonadal tissue and brain. In the brain, expression is high in the palliovisceral lobe and superior buccal lobe but low in the subvertical lobe, superior and inferior frontal lobe, posterior brachial lobe and pedal lobe. Expressed in stomach, rectum, aorta, heart, salivary gland, branchia, pancreas, radula retractor muscle, branchial vessel but not in white body, esophagus, liver and kidney.

The protein resides in the cell membrane. In terms of biological role, receptor for gonadotropin releasing hormone (GnRH) that mediates the action of GnRH to stimulate the secretion of the gonadotropic hormones luteinizing hormone (LH) and follicle-stimulating hormone (FSH). This receptor mediates its action by association with G-proteins that activate a phosphatidylinositol-calcium second messenger system. Ligand interaction triggers steroidogenesis in spermatozoa and follicles. Appears to be involved in contraction of the radula retractor muscle. This is Gonadotropin-releasing hormone receptor from Octopus vulgaris (Common octopus).